We begin with the raw amino-acid sequence, 97 residues long: Core protein A15 homolog (97 aa).

It belongs to the chordopoxvirinae A15 family. In terms of assembly, part of a complex composed of A30, G7, F10 kinase, A15, D2, D3, and J1.

The protein resides in the host cytoplasm. The protein localises to the virion. Functionally, late protein which is a part of a large complex required for early virion morphogenesis. This complex participates in the formation of virosomes and the incorporation of virosomal contents into nascent immature virions. A15 is required for the stability and kinase activity of F10. This is Core protein A15 homolog from Vertebrata (FPV).